Consider the following 137-residue polypeptide: Golgin subfamily A member 7 (137 aa).

2 S-palmitoyl cysteine lipidation sites follow: C69 and C72.

Belongs to the ERF4 family. Interacts with GOLGA3. Interacts with ZDHHC9. Post-translationally, palmitoylated on Cys-69 and Cys-72; which is required for Golgi localization and interaction with GOLGA3.

It localises to the golgi apparatus membrane. Its function is as follows. May be involved in protein transport from Golgi to cell surface. The ZDHHC9-GOLGA7 complex is a palmitoyltransferase specific for HRAS and NRAS. The chain is Golgin subfamily A member 7 (Golga7) from Rattus norvegicus (Rat).